The sequence spans 444 residues: Tubulin beta chain (444 aa).

Residues 1 to 4 (MREI) carry the MREI motif motif. GTP is bound by residues Gln11, Glu69, Ser138, Gly142, Thr143, Gly144, Asn204, and Asn226. Residue Glu69 participates in Mg(2+) binding. The disordered stretch occupies residues 421-444 (EYQQYQDATAEEEEDFNEEAEEEA). Residues 429-444 (TAEEEEDFNEEAEEEA) show a composition bias toward acidic residues. The residue at position 438 (Glu438) is a 5-glutamyl polyglutamate.

This sequence belongs to the tubulin family. As to quaternary structure, dimer of alpha and beta chains. A typical microtubule is a hollow water-filled tube with an outer diameter of 25 nm and an inner diameter of 15 nM. Alpha-beta heterodimers associate head-to-tail to form protofilaments running lengthwise along the microtubule wall with the beta-tubulin subunit facing the microtubule plus end conferring a structural polarity. Microtubules usually have 13 protofilaments but different protofilament numbers can be found in some organisms and specialized cells. Mg(2+) serves as cofactor. In terms of processing, some glutamate residues at the C-terminus are polyglycylated, resulting in polyglycine chains on the gamma-carboxyl group. Glycylation is mainly limited to tubulin incorporated into axonemes (cilia and flagella) whereas glutamylation is prevalent in neuronal cells, centrioles, axonemes, and the mitotic spindle. Both modifications can coexist on the same protein on adjacent residues, and lowering polyglycylation levels increases polyglutamylation, and reciprocally. The precise function of polyglycylation is still unclear. Some glutamate residues at the C-terminus are polyglutamylated, resulting in polyglutamate chains on the gamma-carboxyl group. Polyglutamylation plays a key role in microtubule severing by spastin (SPAST). SPAST preferentially recognizes and acts on microtubules decorated with short polyglutamate tails: severing activity by SPAST increases as the number of glutamates per tubulin rises from one to eight, but decreases beyond this glutamylation threshold.

The protein resides in the cytoplasm. Its subcellular location is the cytoskeleton. Its function is as follows. Tubulin is the major constituent of microtubules, a cylinder consisting of laterally associated linear protofilaments composed of alpha- and beta-tubulin heterodimers. Microtubules grow by the addition of GTP-tubulin dimers to the microtubule end, where a stabilizing cap forms. Below the cap, tubulin dimers are in GDP-bound state, owing to GTPase activity of alpha-tubulin. This chain is Tubulin beta chain (tubb), found in Xenopus laevis (African clawed frog).